Consider the following 331-residue polypeptide: MLDHGTPIQPVSLPAAELDLGAVGGIAWPEPVQRRLRVGLLNNMPDSALVQTERQFRRLIGPGVELRLFSLDTVPRGPLARAHLDRFYETQGALAGAGLDALVVTGAEPKAERLADEPFFPALAAVVDWADASGVPTLFSCLAAHAAVLHLDGIERRPLPTKHSGIYACTAVAHHPLLAGMPASVPVPHSRWNDLPEQALTARGYRVLRRSEQVGVDLFVRERGASMVFLQGHPEYDGDTLAREYRRDIGRFLDGERDTPPALPENYYVDEAVLRLDAFAAVARAYRSPALHADFPTMAETLPRPAAWQEAAAGLFRNWLALVSDRVALAA.

Residue C141 is the Acyl-thioester intermediate of the active site. Substrate contacts are provided by K162 and S190. H233 (proton acceptor) is an active-site residue. E235 is an active-site residue. R247 serves as a coordination point for substrate.

This sequence belongs to the MetA family.

The protein localises to the cytoplasm. The catalysed reaction is L-homoserine + succinyl-CoA = O-succinyl-L-homoserine + CoA. It participates in amino-acid biosynthesis; L-methionine biosynthesis via de novo pathway; O-succinyl-L-homoserine from L-homoserine: step 1/1. Functionally, transfers a succinyl group from succinyl-CoA to L-homoserine, forming succinyl-L-homoserine. In Methylorubrum extorquens (strain DSM 6343 / CIP 106787 / DM4) (Methylobacterium extorquens), this protein is Homoserine O-succinyltransferase.